The following is a 424-amino-acid chain: Tyrosine--tRNA ligase (424 aa).

An L-tyrosine-binding site is contributed by Tyr-37. Positions 42 to 51 match the 'HIGH' region motif; it reads PTADSLHLGH. L-tyrosine is bound by residues Tyr-175 and Gln-179. The 'KMSKS' region signature appears at 235-239; sequence KFGKT. An ATP-binding site is contributed by Lys-238. One can recognise an S4 RNA-binding domain in the interval 357–414; that stretch reads ADLQQALVAAELVPSRGQARTLISSNAVSVNGEKQASIDYVFDDADRLYSRYTLLRRG.

Belongs to the class-I aminoacyl-tRNA synthetase family. TyrS type 1 subfamily. In terms of assembly, homodimer.

The protein resides in the cytoplasm. The enzyme catalyses tRNA(Tyr) + L-tyrosine + ATP = L-tyrosyl-tRNA(Tyr) + AMP + diphosphate + H(+). In terms of biological role, catalyzes the attachment of tyrosine to tRNA(Tyr) in a two-step reaction: tyrosine is first activated by ATP to form Tyr-AMP and then transferred to the acceptor end of tRNA(Tyr). This Sodalis glossinidius (strain morsitans) protein is Tyrosine--tRNA ligase.